A 57-amino-acid polypeptide reads, in one-letter code: uncharacterized protein (57 aa).

This is an uncharacterized protein from Haemophilus influenzae (strain ATCC 51907 / DSM 11121 / KW20 / Rd).